The sequence spans 200 residues: NADH-quinone oxidoreductase subunit C (200 aa).

Belongs to the complex I 30 kDa subunit family. As to quaternary structure, NDH-1 is composed of 14 different subunits. Subunits NuoB, C, D, E, F, and G constitute the peripheral sector of the complex.

The protein localises to the cell inner membrane. It carries out the reaction a quinone + NADH + 5 H(+)(in) = a quinol + NAD(+) + 4 H(+)(out). In terms of biological role, NDH-1 shuttles electrons from NADH, via FMN and iron-sulfur (Fe-S) centers, to quinones in the respiratory chain. The immediate electron acceptor for the enzyme in this species is believed to be ubiquinone. Couples the redox reaction to proton translocation (for every two electrons transferred, four hydrogen ions are translocated across the cytoplasmic membrane), and thus conserves the redox energy in a proton gradient. The sequence is that of NADH-quinone oxidoreductase subunit C from Paraburkholderia phytofirmans (strain DSM 17436 / LMG 22146 / PsJN) (Burkholderia phytofirmans).